A 303-amino-acid chain; its full sequence is Recombination-associated protein RdgC (303 aa).

This sequence belongs to the RdgC family.

The protein localises to the cytoplasm. It localises to the nucleoid. Its function is as follows. May be involved in recombination. This is Recombination-associated protein RdgC from Shewanella sediminis (strain HAW-EB3).